We begin with the raw amino-acid sequence, 503 residues long: Activin receptor type-1-like (503 aa).

A signal peptide spans 1-21 (MTLGSPRKGLLMLLMALVTQG). Residues 22 to 118 (DPVKPSRGPL…PSEQPGTDGQ (97 aa)) lie on the Extracellular side of the membrane. Disulfide bonds link Cys34–Cys51, Cys36–Cys41, and Cys46–Cys69. Residues 73-76 (HREL) are mediates specificity for BMP ligand. 2 disulfides stabilise this stretch: Cys77–Cys89 and Cys90–Cys95. Asn98 is a glycosylation site (N-linked (GlcNAc...) asparagine). The chain crosses the membrane as a helical span at residues 119–141 (LALILGPVLALLALVALGVLGLW). At 142 to 503 (HVRRRQEKQR…NSPEKPKVIQ (362 aa)) the chain is on the cytoplasmic side. Residues Ser155, Ser160, and Ser161 each carry the phosphoserine modification. Residues 172–201 (SMLGDLLDSDCTTGSGSGLPFLVQRTVARQ) form the GS domain. The region spanning 202 to 492 (VALVECVGKG…LRIKKTLQKI (291 aa)) is the Protein kinase domain. ATP-binding positions include 208–216 (VGKGRYGEV) and Lys229. Catalysis depends on Asp330, which acts as the Proton acceptor.

It belongs to the protein kinase superfamily. TKL Ser/Thr protein kinase family. TGFB receptor subfamily. As to quaternary structure, interacts with TSC22D1/TSC-22. Requires Mg(2+) as cofactor. Mn(2+) is required as a cofactor.

It localises to the cell membrane. It catalyses the reaction L-threonyl-[receptor-protein] + ATP = O-phospho-L-threonyl-[receptor-protein] + ADP + H(+). The catalysed reaction is L-seryl-[receptor-protein] + ATP = O-phospho-L-seryl-[receptor-protein] + ADP + H(+). Its function is as follows. Type I receptor for TGF-beta family ligands BMP9/GDF2 and BMP10 and important regulator of normal blood vessel development. On ligand binding, forms a receptor complex consisting of two type II and two type I transmembrane serine/threonine kinases. Type II receptors phosphorylate and activate type I receptors which autophosphorylate, then bind and activate SMAD transcriptional regulators. May bind activin as well. The chain is Activin receptor type-1-like (ACVRL1) from Homo sapiens (Human).